The sequence spans 966 residues: Phosphoenolpyruvate carboxylase, housekeeping isozyme (966 aa).

At serine 11 the chain carries Phosphoserine. Residues histidine 172 and lysine 601 contribute to the active site.

This sequence belongs to the PEPCase type 1 family. In terms of assembly, homotetramer. Requires Mg(2+) as cofactor.

It localises to the cytoplasm. It catalyses the reaction oxaloacetate + phosphate = phosphoenolpyruvate + hydrogencarbonate. Its activity is regulated as follows. By light-reversible phosphorylation. Through the carboxylation of phosphoenolpyruvate (PEP) it forms oxaloacetate, a four-carbon dicarboxylic acid source for the tricarboxylic acid cycle. In Saccharum hybrid (Sugarcane), this protein is Phosphoenolpyruvate carboxylase, housekeeping isozyme.